A 224-amino-acid polypeptide reads, in one-letter code: UPF0758 protein Nmul_A2138 (224 aa).

Residues 102–224 (AMDSPGPVRA…TLSFAEQGLI (123 aa)) form the MPN domain. His-173, His-175, and Asp-186 together coordinate Zn(2+). A JAMM motif motif is present at residues 173–186 (HNHPSGAAEPSHAD).

It belongs to the UPF0758 family.

This Nitrosospira multiformis (strain ATCC 25196 / NCIMB 11849 / C 71) protein is UPF0758 protein Nmul_A2138.